The sequence spans 167 residues: Inclusion membrane protein G (167 aa).

Helical transmembrane passes span 37-57 and 63-83; these read LSLF…AVLF and VLPY…AVIV. Disordered regions lie at residues 97–136 and 148–167; these read KRSP…STFG and VSGA…SHSF. Residues 122 to 134 are compositionally biased toward low complexity; the sequence is ESASPQASPTSST. A Phosphorylation-dependent binding motif motif is present at residues 161–166; it reads RSRSHS. S166 is subject to Phosphoserine.

Phosphorylated by chlamydial kinase Pnk1.

The protein localises to the secreted. It localises to the host vacuole. It is found in the host pathogen-containing vacuole. The protein resides in the host pathogen-containing vacuole membrane. Its function is as follows. Inclusion membrane protein probably involved in early modification events of the chlamydial inclusion. Binds to the host cell 14-3-3 beta (YWHAB); phosphorylation of Ser-166 is probably required. In Chlamydia trachomatis serovar D (strain ATCC VR-885 / DSM 19411 / UW-3/Cx), this protein is Inclusion membrane protein G (incG).